The primary structure comprises 104 residues: Large ribosomal subunit protein bL21 (104 aa).

This sequence belongs to the bacterial ribosomal protein bL21 family. Part of the 50S ribosomal subunit. Contacts protein L20.

Functionally, this protein binds to 23S rRNA in the presence of protein L20. In Streptococcus sanguinis (strain SK36), this protein is Large ribosomal subunit protein bL21.